The chain runs to 177 residues: MSRVAKAPVTIPAGVEVTLNGQEIAVKGKNGTLKRILNAAVIVTKEENVLKFAPQEGVTGADAQAGTARALVNNMVIGVTTGFERKLVLVGVGYRAQAKGKSVGLALGFSHPIDHELPEGVTAECPTQTEIVLKSADKAMLGQVAADIRAYRSPEPYKGKGVRYSDEVVRTKEAKKK.

This sequence belongs to the universal ribosomal protein uL6 family. As to quaternary structure, part of the 50S ribosomal subunit.

In terms of biological role, this protein binds to the 23S rRNA, and is important in its secondary structure. It is located near the subunit interface in the base of the L7/L12 stalk, and near the tRNA binding site of the peptidyltransferase center. The chain is Large ribosomal subunit protein uL6 from Tolumonas auensis (strain DSM 9187 / NBRC 110442 / TA 4).